We begin with the raw amino-acid sequence, 461 residues long: MKVLFATGEAFPFVKTGGLGDVSYSLPKTLKQKENVDIRVILPKYSKISNELLKDARHLGHKEIWVAHHNEYVGIEEVELEGVIYYFVDNERYFKRPNVYGEFDDCERFLFFCKAVVETMDITKFKPDIIHCNDWQSALIPIYLKERGIYDVKTIFTIHNLRFQGFFFNNVIEDLLEIDRAKYFQEDGLKYYDMISFLKGGVVYSDYITTVSDSYAEEIKTQELGEGIHGLFQKYDYKLSGIVNGIDKISYPLSKKPHKILKADLQKKLGLDVEEDTPLIVIITRLDRQKGLDYIVEKFDEMMSLGIQFILLGTGEKRYEHFFAYQEYLHKGQVCSYIGFNQELSTEIYAGADIFLMPSVFEPCGLSQMIAMRYGCIPVVRETGGLKDTVKPYNEYTGEGDGFGFKQANADDMIKTLKYAIKMYHRPNVWQEIIKNAKKRDNSWDKPAKRYKELYQRLIEG.

Lys-15 serves as a coordination point for ADP-alpha-D-glucose.

It belongs to the glycosyltransferase 1 family. Bacterial/plant glycogen synthase subfamily.

The catalysed reaction is [(1-&gt;4)-alpha-D-glucosyl](n) + ADP-alpha-D-glucose = [(1-&gt;4)-alpha-D-glucosyl](n+1) + ADP + H(+). Its pathway is glycan biosynthesis; glycogen biosynthesis. Synthesizes alpha-1,4-glucan chains using ADP-glucose. The protein is Glycogen synthase of Fusobacterium nucleatum subsp. nucleatum (strain ATCC 25586 / DSM 15643 / BCRC 10681 / CIP 101130 / JCM 8532 / KCTC 2640 / LMG 13131 / VPI 4355).